A 260-amino-acid chain; its full sequence is Indole-3-glycerol phosphate synthase (260 aa).

This sequence belongs to the TrpC family.

The enzyme catalyses 1-(2-carboxyphenylamino)-1-deoxy-D-ribulose 5-phosphate + H(+) = (1S,2R)-1-C-(indol-3-yl)glycerol 3-phosphate + CO2 + H2O. Its pathway is amino-acid biosynthesis; L-tryptophan biosynthesis; L-tryptophan from chorismate: step 4/5. In Desulfotalea psychrophila (strain LSv54 / DSM 12343), this protein is Indole-3-glycerol phosphate synthase.